Here is a 91-residue protein sequence, read N- to C-terminus: Putative membrane protein insertion efficiency factor (91 aa).

Residues 72–91 (SGGNDPVPEKLTHINHQHEK) form a disordered region. Residues 78–91 (VPEKLTHINHQHEK) are compositionally biased toward basic and acidic residues.

It belongs to the UPF0161 family.

It is found in the cell inner membrane. Could be involved in insertion of integral membrane proteins into the membrane. This chain is Putative membrane protein insertion efficiency factor, found in Pseudoalteromonas translucida (strain TAC 125).